The following is a 127-amino-acid chain: NADPH-dependent 7-cyano-7-deazaguanine reductase (127 aa).

Catalysis depends on cysteine 40, which acts as the Thioimide intermediate. Residue aspartate 47 is the Proton donor of the active site. Residues 62–64 and 81–82 each bind substrate; these read VEL and HE.

The protein belongs to the GTP cyclohydrolase I family. QueF type 1 subfamily.

Its subcellular location is the cytoplasm. The enzyme catalyses 7-aminomethyl-7-carbaguanine + 2 NADP(+) = 7-cyano-7-deazaguanine + 2 NADPH + 3 H(+). The protein operates within tRNA modification; tRNA-queuosine biosynthesis. Its function is as follows. Catalyzes the NADPH-dependent reduction of 7-cyano-7-deazaguanine (preQ0) to 7-aminomethyl-7-deazaguanine (preQ1). This chain is NADPH-dependent 7-cyano-7-deazaguanine reductase, found in Campylobacter jejuni subsp. jejuni serotype O:2 (strain ATCC 700819 / NCTC 11168).